Here is a 91-residue protein sequence, read N- to C-terminus: MPRSLKKGPFIDLHLLKKVEVAVEKNDRKPVKTWSRRSMILPQMVGLTIAVHNGRQHVPVLVNEDMVGHKLGEFAGTRTYRGHVADKKAKR.

The protein belongs to the universal ribosomal protein uS19 family.

Functionally, protein S19 forms a complex with S13 that binds strongly to the 16S ribosomal RNA. The protein is Small ribosomal subunit protein uS19 of Pseudomonas putida (strain ATCC 700007 / DSM 6899 / JCM 31910 / BCRC 17059 / LMG 24140 / F1).